Here is a 266-residue protein sequence, read N- to C-terminus: Biotin--[acetyl-CoA-carboxylase] ligase (266 aa).

The BPL/LPL catalytic domain maps to 14–202; that stretch reads RSLRDQLIGA…ELEARIIQWR (189 aa). Residues 38–39, Gln-63, Arg-67, and Lys-138 contribute to the biotin site; that span reads ST.

It belongs to the biotin--protein ligase family. Monomer in solution. Forms dimers under specific crystallization conditions.

It carries out the reaction biotin + L-lysyl-[protein] + ATP = N(6)-biotinyl-L-lysyl-[protein] + AMP + diphosphate + H(+). The enzyme catalyses biotin + ATP + H(+) = biotinyl-5'-AMP + diphosphate. It catalyses the reaction biotinyl-5'-AMP + L-lysyl-[protein] = N(6)-biotinyl-L-lysyl-[protein] + AMP + 2 H(+). Binding of biotin and ATP significantly increases the thermal stability of BirA and leads to the formation of a high affinity holoenzyme complex. In terms of biological role, catalyzes the transfer of biotin onto a conserved lysine residue of the biotin carboxyl carrier protein (BCCP) domain of acetyl-CoA carboxylase and converts it to active holo-BCCP. Forms an acyl-adenylate intermediate. Cannot use GTP or desthiobiotin. This is Biotin--[acetyl-CoA-carboxylase] ligase from Mycobacterium tuberculosis (strain ATCC 25618 / H37Rv).